We begin with the raw amino-acid sequence, 28 residues long: AIMDTIKDTAKTVAVGLLNKLKCKITGC.

Cysteines 23 and 28 form a disulfide.

Expressed by the skin glands.

The protein resides in the secreted. Functionally, mast cell degranulating peptide. Causes histamine release from rat peritoneal mast cells in vitro. Has antibacterial activity against the Gram-negative bacterium E.coli K12 and Gram-positive bacterium M.luteus NCT C2665. In Lithobates sevosus (Dusky gopher frog), this protein is Ranatuerin-2SEb.